Here is a 199-residue protein sequence, read N- to C-terminus: MYQDQDFQVFEDQTLAGRLGKIQKQIDPKFLITAGDLEPVLAELSVPIYQHVSQHRRRTKNPPTDTWIAFSTSKRGYKMLPHLEIGFWDDRFFIWLAVLQEAKNRQGLLGQVQLADVLNLPSTFECGNDHADKNCGRPLTLTNYQALMREQVNRHAEWQLGRNFMRGSDLFTTTPDDQAAIIRDTVAALLPIYRQLIAD.

The protein belongs to the UPF0637 family.

In Levilactobacillus brevis (strain ATCC 367 / BCRC 12310 / CIP 105137 / JCM 1170 / LMG 11437 / NCIMB 947 / NCTC 947) (Lactobacillus brevis), this protein is UPF0637 protein LVIS_1261.